We begin with the raw amino-acid sequence, 97 residues long: ADAPAGFTLCKACHSVEAGKNGVGPSLAGVYGRKAGTISGFKFSDPHIKSGLTWDEPTLTKYLADPKTVIPGNKMVFAGLKNPDDVKAVIEYLKTLK.

Heme c is bound by residues C10, C13, H14, and M75.

This sequence belongs to the cytochrome c family. In terms of processing, binds 1 heme c group covalently per subunit.

Functionally, cytochrome c2 is found mainly in purple, non-sulfur, photosynthetic bacteria where it functions as the electron donor to the oxidized bacteriochlorophyll in the photophosphorylation pathway. However, it may also have a role in the respiratory chain and is found in some non-photosynthetic bacteria. This chain is Cytochrome c2 iso-2, found in Magnetospirillum molischianum (Rhodospirillum molischianum).